We begin with the raw amino-acid sequence, 287 residues long: Ribosomal RNA small subunit methyltransferase I (287 aa).

This sequence belongs to the methyltransferase superfamily. RsmI family.

Its subcellular location is the cytoplasm. The enzyme catalyses cytidine(1402) in 16S rRNA + S-adenosyl-L-methionine = 2'-O-methylcytidine(1402) in 16S rRNA + S-adenosyl-L-homocysteine + H(+). Its function is as follows. Catalyzes the 2'-O-methylation of the ribose of cytidine 1402 (C1402) in 16S rRNA. This Helicobacter pylori (strain ATCC 700392 / 26695) (Campylobacter pylori) protein is Ribosomal RNA small subunit methyltransferase I.